The following is a 110-amino-acid chain: NADH dehydrogenase [ubiquinone] iron-sulfur protein 6, mitochondrial (110 aa).

Residues 1 to 22 (MASNLLKALIRSQILPSSRRNF) constitute a mitochondrion transit peptide.

This sequence belongs to the complex I NDUFS6 subunit family. In terms of assembly, complex I is composed of at least 49 different subunits. This is a component of the iron-sulfur (IP) fragment of the enzyme.

The protein localises to the mitochondrion inner membrane. Accessory subunit of the mitochondrial membrane respiratory chain NADH dehydrogenase (Complex I), that is believed not to be involved in catalysis. Complex I functions in the transfer of electrons from NADH to the respiratory chain. The immediate electron acceptor for the enzyme is believed to be ubiquinone. In Arabidopsis thaliana (Mouse-ear cress), this protein is NADH dehydrogenase [ubiquinone] iron-sulfur protein 6, mitochondrial.